The sequence spans 1827 residues: MLLRLELSALLLLLIAAPVRLQDECVGNSCYPNLGDLMVGRAAQLAASSTCGLYRPQNYCILGYLENERKCFTCDSRSPYNDYHNPSSHRIENIITTFQPERKMKWWQSENGVHEVSIQLDLEAMFQFSHLILTFKSFRPASMLVERSKDFGRTWKVFRYFAEDCANSFPGISEGPAHSIDDLVCDSRYSGAEPSTEGEVVLKALDPSFDIHDPYDSTIQGLITLTNLRVNFTRLLTLGDTLLTRRKRNPQDKYYYALYEMVVRGSCFCNGHASQCIPVDGARGDTFTEPGMVHGRCVCQHNTAGYNCERCQDFYHDAPWRPGGKADSDVCKRCNCHSHSEKCHFELARYLATGGVSGGVCDDCRNNRIGPQCELCGPFYYQDPQRSVDDPYACIPCDCDLDGSVDRGLCDPVNGQCVCKQNIEGERCDRCKVGFYGFSRDDPSGCQLCRCNFLGTIQVGNPCDPTTGRCICEHFAYGSQCDQCLPGYWGLGNTVYGCIPCDCDIGGALKTECSSVDGQCKCRPNMVGQKCNDPAPGYFLAPLDFYIYEAENAAPLAVISPFIGPPPFVYPTEGIPERPTKLPLCPPAPKPSSVPYREHITVQPSPAPHNPQVTLPMCEHYFRQRGYDFKISNGRLVVVKREKRQTRRRRQGQRTIPFEPGSPLQILLRQRANDQSITWTGLGFVRVQDGAGLRFTVSNIPATLDYYVVVRYEPESTDDWTAIVSILSIGSEDERCPNDQSNKMFTLPASGRTATLDLPVCLSDGNQYHVDITFRKQPSEDPHSSSFILIDSLGLIPKVESVPNFCSQSYLSQFQQYRCIELAVQAGGQTLPEVCEMLIGSMSAFIHNGAVSCNCHHVGAYGSSCSKFGGQCQCKPNVIGRCCDSCAPLTYGLGPNGCSPCDCDRSGSTTELCDQTTGQCSCRDGITGLQCNRCYPGYYGFPLCRRCQCNRLADICDPITGDCLDCREHSAGRNCERCEEGYVGDPVSGQPCEPCLCPDLNGSGRFFAFSCNKDPRSGAPYCECLPGHTGPQCDSCSPGFYGDLRLPGGRCKECCCNNNIDPRDGDACDPVTGECLRCLHNTEGPRCQSCKRGYYGNALAQDCKECSCDRRGTDDSKCPAGSPCFCDQDTGQCPCRPGVQGALCNECDDGYWNMDGDYGCQPCNCNREHALNYICDKITGQCLCQPEYGGRICDECGPNHFGNPDLQCMFCDCNLEGTVHPACDAYTGECLCKPGVTGPFCDECAPGHNNNFPACEPCHACNHLWEKIISDLSLDAERIETMMPCPEDFRSRPELQHLQNLLEKLQNVLNMGAQDELKKLEELLARIRNETEIIDPNIIIIDPTLLLNTDIDYIRLEFNKLLKNLREKAKEGPVTDIKAVNDIFNKIKKFYDEFTDSEKKVEAAKKVQEASRKTREKVTLELAKCQIGEMDKLERKVKALSAANINEEVCGAPGDAECEKAKCGGALCGKCGGPDCTGSLPISLNASKLAEMTEKNITALRSQLKEADAQLRNASEMTSYVKDQAENMMDKINRTKTKYEQEKTDTKALIEKVKTYLQDELVKPEDIEKLANAVLSIQLPKSPDEIKDMIEDIKKILANITEFNDDLEYLEKQAKIAGNMKERAKEILNRTELINVKEIEKALNDTAKLHDKIFNDLDEAEQNNDVIREKVNETEPKLKNIEDHLNLTRAKTLLDEIEALKNKTEMNRAQGKEAKDTADAALNSANDTGKDLEELKEQFEKLKLNSTNQNVSSEANERLKNITMEAENLAKHVEDKMKEIEDLEEKILLSNERKDEMRKELEALQKEADDLKKFIVDKVQRYNLCSP.

The signal sequence occupies residues 1 to 21 (MLLRLELSALLLLLIAAPVRL). The Laminin N-terminal domain maps to 26–266 (VGNSCYPNLG…ALYEMVVRGS (241 aa)). A glycan (N-linked (GlcNAc...) asparagine) is linked at Asn231. Intrachain disulfides connect Cys267–Cys276, Cys269–Cys297, Cys299–Cys308, Cys311–Cys331, Cys334–Cys343, Cys336–Cys361, Cys364–Cys373, Cys376–Cys394, Cys397–Cys410, Cys399–Cys417, Cys419–Cys428, Cys431–Cys446, Cys449–Cys463, Cys451–Cys470, Cys472–Cys481, Cys484–Cys498, Cys501–Cys513, Cys503–Cys520, and Cys522–Cys531. Laminin EGF-like domains follow at residues 267–333 (CFCN…VCKR), 334–396 (CNCH…ACIP), 397–448 (CDCD…GCQL), and 449–500 (CRCN…GCIP). In terms of domain architecture, Laminin EGF-like 5; truncated spans 501-544 (CDCDIGGALKTECSSVDGQCKCRPNMVGQKCNDPAPGYFLAPLD). The Laminin IV type B domain maps to 540-847 (LAPLDFYIYE…LIGSMSAFIH (308 aa)). 32 cysteine pairs are disulfide-bonded: Cys853/Cys865, Cys855/Cys872, Cys874/Cys883, Cys886/Cys898, Cys901/Cys913, Cys903/Cys920, Cys922/Cys931, Cys934/Cys944, Cys947/Cys956, Cys949/Cys963, Cys966/Cys975, Cys978/Cys992, Cys995/Cys1011, Cys997/Cys1022, Cys1024/Cys1033, Cys1036/Cys1051, Cys1054/Cys1068, Cys1056/Cys1075, Cys1078/Cys1087, Cys1090/Cys1103, Cys1106/Cys1126, Cys1108/Cys1133, Cys1135/Cys1144, Cys1147/Cys1160, Cys1163/Cys1175, Cys1165/Cys1182, Cys1184/Cys1193, Cys1196/Cys1208, Cys1211/Cys1223, Cys1213/Cys1230, Cys1232/Cys1241, and Cys1244/Cys1255. Laminin EGF-like domains follow at residues 853 to 900 (CNCH…GCSP), 901 to 946 (CDCD…LCRR), 947 to 994 (CQCN…PCEP), 995 to 1053 (CLCP…RCKE), 1054 to 1105 (CCCN…DCKE), 1106 to 1162 (CSCD…GCQP), 1163 to 1210 (CNCN…QCMF), and 1211 to 1257 (CDCN…ACEP). Asn1001 carries N-linked (GlcNAc...) asparagine glycosylation. The interval 1258–1449 (CHACNHLWEK…LSAANINEEV (192 aa)) is domain II. 2 coiled-coil regions span residues 1294–1335 (ELQH…EIID) and 1385–1449 (NKIK…NEEV). Residue Asn1329 is glycosylated (N-linked (GlcNAc...) asparagine). The domain alpha stretch occupies residues 1450 to 1476 (CGAPGDAECEKAKCGGALCGKCGGPDC). Positions 1477–1827 (TGSLPISLNA…KVQRYNLCSP (351 aa)) are domain I. Asn1485, Asn1496, Asn1513, Asn1533, Asn1599, Asn1629, Asn1644, Asn1672, Asn1686, Asn1702, Asn1726, Asn1745, Asn1750, and Asn1761 each carry an N-linked (GlcNAc...) asparagine glycan. Coiled-coil stretches lie at residues 1485 to 1554 (NASK…EKVK) and 1584 to 1820 (DEIK…DKVQ).

As to quaternary structure, laminin is a complex glycoprotein, consisting of three different polypeptide chains (alpha, beta, gamma), which are bound to each other by disulfide bonds into a cross-shaped molecule comprising one long and three short arms with globules at each end.

The protein resides in the secreted. Its subcellular location is the extracellular space. It is found in the extracellular matrix. It localises to the basement membrane. Its function is as follows. Binding to cells via a high affinity receptor, laminin is thought to mediate the attachment, migration and organization of cells into tissues during embryonic development by interacting with other extracellular matrix components. Positively regulates apical-basal distribution of Muller glia cells in the retina. In Danio rerio (Zebrafish), this protein is Laminin subunit beta-4 (lamb4).